We begin with the raw amino-acid sequence, 3301 residues long: Cadherin EGF LAG seven-pass G-type receptor 3 (3301 aa).

The signal sequence occupies residues 1–31; sequence MARRPLWWGLPGPSTPVLLLLLLSLFPFSRE. The Extracellular portion of the chain corresponds to 32–2531; that stretch reads ELGGGGDQDW…RLEGDLELLA (2500 aa). Disordered stretches follow at residues 148-189 and 202-314; these read LPLD…ARRS and KLWE…NRHP. Residues 267–276 show a composition bias toward basic residues; it reads MRSRGLFRRR. Cadherin domains follow at residues 317–424, 425–536, 537–642, 643–747, 748–849, 850–952, 953–1058, 1059–1160, and 1161–1257; these read PQYN…APVF, EQAQ…APQF, SEKR…APIF, VSTP…RPEF, TMKE…RPVF, QSAH…APQF, VASH…APVF, PAEE…SPVL, and NNFQ…VVII. An N-linked (GlcNAc...) asparagine glycan is attached at asparagine 623. Asparagine 838 carries an N-linked (GlcNAc...) asparagine glycan. Residues asparagine 1173, asparagine 1213, asparagine 1308, and asparagine 1318 are each glycosylated (N-linked (GlcNAc...) asparagine). Residues 1366-1424 enclose the EGF-like 1; calcium-binding domain; that stretch reads DDNVCLREPCENYMKCVSVLRFDSSAPFLASTSTLFRPIQPIAGLRCRCPPGFTGDFCE. Intrachain disulfides connect cysteine 1370–cysteine 1381, cysteine 1375–cysteine 1412, cysteine 1414–cysteine 1423, cysteine 1430–cysteine 1441, cysteine 1435–cysteine 1450, cysteine 1452–cysteine 1459, cysteine 1468–cysteine 1479, cysteine 1473–cysteine 1489, and cysteine 1491–cysteine 1502. In terms of domain architecture, EGF-like 2; calcium-binding spans 1426–1460; the sequence is ELDLCYSNPCRNGGACARREGGYTCVCRPRFTDCE. The EGF-like 3; calcium-binding domain occupies 1464 to 1503; sequence EAGRCVPGVCRNGGTCTNAPNGGFRCQCPAGGAFEGPRCE. The 205-residue stretch at 1504–1708 folds into the Laminin G-like 1 domain; it reads VAARSFPPSS…VANNGTMAGC (205 aa). N-linked (GlcNAc...) asparagine glycans are attached at residues asparagine 1638 and asparagine 1702. 4 disulfides stabilise this stretch: cysteine 1682–cysteine 1708, cysteine 1715–cysteine 1726, cysteine 1720–cysteine 1735, and cysteine 1737–cysteine 1746. The EGF-like 4; calcium-binding domain maps to 1711-1747; it reads KSHFCASGPCKNNGFCSERWGGFSCDCPVGFGGKDCR. The 183-residue stretch at 1751–1933 folds into the Laminin G-like 2 domain; sequence AHPYHFQGNG…SHRVNVEPGC (183 aa). A glycan (N-linked (GlcNAc...) asparagine) is linked at asparagine 1759. Cystine bridges form between cysteine 1904–cysteine 1933, cysteine 1939–cysteine 1950, cysteine 1944–cysteine 1959, cysteine 1961–cysteine 1970, cysteine 1974–cysteine 1985, cysteine 1979–cysteine 1997, cysteine 1999–cysteine 2008, cysteine 2016–cysteine 2029, and cysteine 2031–cysteine 2041. One can recognise an EGF-like 5; calcium-binding domain in the interval 1935-1971; sequence VTNPCASGPCPPHADCKDLWQTFSCTCRPGYYGPGCV. Aspartate 1952 carries the post-translational modification (3R)-3-hydroxyaspartate. Positions 1972 to 2002 constitute an EGF-like 6; calcium-binding domain; that stretch reads DACLLNPCQNQGSCRHLQGAPHGYTCDCVSG. The EGF-like 7; calcium-binding domain maps to 2003–2042; sequence YFGQHCEHRVDQQCPRGWWGSPTCGPCNCDVHKGFDPNCN. An N-linked (GlcNAc...) asparagine glycan is attached at asparagine 2042. An EGF-like 8; calcium-binding domain is found at 2044–2079; the sequence is TNGQCHCKEFHYRPRGSDSCLPCDCYPVGSTSRSCA. Cystine bridges form between cysteine 2048–cysteine 2063, cysteine 2050–cysteine 2066, cysteine 2068–cysteine 2078, cysteine 2087–cysteine 2096, and cysteine 2099–cysteine 2111. Positions 2066 to 2113 constitute a Laminin EGF-like domain; sequence CDCYPVGSTSRSCAPHSGQCPCRPGALGRQCNSCDSPFAEVTASGCRV. Tyrosine 2115 carries the phosphotyrosine modification. Residues asparagine 2166, asparagine 2185, asparagine 2375, asparagine 2465, and asparagine 2497 are each glycosylated (N-linked (GlcNAc...) asparagine). The tract at residues 2353-2388 is disordered; that stretch reads LLPSQASQPSPSEVLPTSSNAENATASSVVSPPAPL. Residues 2355 to 2383 show a composition bias toward low complexity; it reads PSQASQPSPSEVLPTSSNAENATASSVVS. A GAIN-B domain is found at 2357 to 2521; the sequence is QASQPSPSEV…GVLMDASPRE (165 aa). Cystine bridges form between cysteine 2471–cysteine 2503 and cysteine 2491–cysteine 2505. The GPS stretch occupies residues 2471–2521; sequence CVQWDPPGPTDQHGMWTARDCELVHRNGSHARCRCSRTGTFGVLMDASPRE. A helical membrane pass occupies residues 2532–2552; it reads VFTHVVVAVSVTALVLTAAVL. The Cytoplasmic portion of the chain corresponds to 2553–2563; it reads LSLRSLKSNVR. A helical transmembrane segment spans residues 2564-2584; sequence GIHANVAAALGVAELLFLLGI. At 2585-2592 the chain is on the extracellular side; that stretch reads HRTHNQLL. Residues 2593–2613 traverse the membrane as a helical segment; the sequence is CTAVAILLHYFFLSTFAWLLV. Residues 2614–2634 lie on the Cytoplasmic side of the membrane; sequence QGLHLYRMQVEPRNVDRGAMR. A helical membrane pass occupies residues 2635 to 2655; the sequence is FYHALGWGVPAVLLGLAVGLD. Over 2656-2673 the chain is Extracellular; the sequence is PEGYGNPDFCWISIHEPL. The chain crosses the membrane as a helical span at residues 2674-2694; the sequence is IWSFAGPIVLVIVMNGTMFLL. Over 2695 to 2716 the chain is Cytoplasmic; the sequence is AARTSCSTGQREAKKTSVLTLR. Residues 2717 to 2737 form a helical membrane-spanning segment; that stretch reads SSFLLLLLVSASWLFGLLAVN. At 2738–2744 the chain is on the extracellular side; it reads HSILAFH. Residues 2745-2765 form a helical membrane-spanning segment; the sequence is YLHAGLCGLQGLAVLLLFCVL. The Cytoplasmic segment spans residues 2766–3301; that stretch reads NADARAAWTP…SEVPRSEGHS (536 aa). Disordered regions lie at residues 2823–2844, 2879–2919, and 2969–2992; these read SSAR…YLRD, AGAD…RPLR, and SNKD…TSLG. The span at 2881–2891 shows a compositional bias: acidic residues; sequence ADSDSDSDLSL. A compositionally biased stretch (basic residues) spans 2910–2919; sequence TRGRFQRPLR. Tyrosine 3042 is subject to Phosphotyrosine. The tract at residues 3083–3301 is disordered; sequence APVLHPLSRP…SEVPRSEGHS (219 aa). Position 3090 is a phosphoserine (serine 3090). Basic and acidic residues predominate over residues 3094–3111; sequence SQERLDTAPARLEARDRG. Composition is skewed to low complexity over residues 3168 to 3189 and 3239 to 3261; these read SPQR…SLSR and LSSI…STPS. The segment covering 3276–3289 has biased composition (polar residues); the sequence is TPRSATSHSISELS.

The protein belongs to the G-protein coupled receptor 2 family. LN-TM7 subfamily. In terms of tissue distribution, expressed in the CNS and in the eye.

The protein resides in the cell membrane. Its function is as follows. Receptor that may have an important role in cell/cell signaling during nervous system formation. The chain is Cadherin EGF LAG seven-pass G-type receptor 3 (Celsr3) from Mus musculus (Mouse).